Consider the following 336-residue polypeptide: Alcohol dehydrogenase (336 aa).

The Zn(2+) site is built by C37, H58, C89, C92, C95, C103, and C145.

It belongs to the zinc-containing alcohol dehydrogenase family. It depends on Zn(2+) as a cofactor.

It catalyses the reaction a primary alcohol + NAD(+) = an aldehyde + NADH + H(+). It carries out the reaction a secondary alcohol + NAD(+) = a ketone + NADH + H(+). The polypeptide is Alcohol dehydrogenase (adh) (Staphylococcus aureus (strain USA300)).